A 436-amino-acid chain; its full sequence is GTPase Der (436 aa).

2 EngA-type G domains span residues 4–167 (PTIA…PAQE) and 175–351 (IKFS…ESQN). Residues 10-17 (GRPNVGKS), 57-61 (DTGGI), 119-122 (NKVD), 181-188 (GRPNVGKS), 229-233 (DTAGM), and 294-297 (NKWD) contribute to the GTP site. The KH-like domain maps to 352 to 436 (TRIPSAVLND…PIHLIARKRK (85 aa)).

It belongs to the TRAFAC class TrmE-Era-EngA-EngB-Septin-like GTPase superfamily. EngA (Der) GTPase family. As to quaternary structure, associates with the 50S ribosomal subunit.

Functionally, GTPase that plays an essential role in the late steps of ribosome biogenesis. The sequence is that of GTPase Der from Streptococcus suis (strain 98HAH33).